We begin with the raw amino-acid sequence, 614 residues long: Bifunctional enzyme CysN/CysC (614 aa).

Positions 1 to 441 are sulfate adenylyltransferase; the sequence is MTTLLRLATA…SLVTAQDRPP (441 aa). The tr-type G domain maps to 2–217; the sequence is TTLLRLATAG…DVYIAGDRNM (216 aa). Residues 11–18 form a G1 region; the sequence is GSVDDGKS. 11–18 contributes to the GTP binding site; sequence GSVDDGKS. A G2 region spans residues 67 to 71; the sequence is GITID. The segment at 88–91 is G3; the sequence is DTPG. Residues 88–92 and 143–146 each bind GTP; these read DTPGH and NKMD. The G4 stretch occupies residues 143 to 146; the sequence is NKMD. The G5 stretch occupies residues 180-182; the sequence is SAL. The adenylyl-sulfate kinase stretch occupies residues 442 to 614; sequence RGKTVWFTGL…EVIDLLESSS (173 aa). Residue 450–457 coordinates ATP; that stretch reads GLSGSGKS. The active-site Phosphoserine intermediate is Ser524. The segment at 578 to 597 is disordered; the sequence is GIDSPYQRPKNPDLRLTPDR. The span at 587-597 shows a compositional bias: basic and acidic residues; sequence KNPDLRLTPDR.

The protein in the C-terminal section; belongs to the APS kinase family. This sequence in the N-terminal section; belongs to the TRAFAC class translation factor GTPase superfamily. Classic translation factor GTPase family. CysN/NodQ subfamily. Heterodimer composed of CysD, the smaller subunit, and CysNC.

It catalyses the reaction sulfate + ATP + H(+) = adenosine 5'-phosphosulfate + diphosphate. It carries out the reaction adenosine 5'-phosphosulfate + ATP = 3'-phosphoadenylyl sulfate + ADP + H(+). The protein operates within sulfur metabolism; hydrogen sulfide biosynthesis; sulfite from sulfate: step 1/3. It participates in sulfur metabolism; hydrogen sulfide biosynthesis; sulfite from sulfate: step 2/3. With CysD forms the ATP sulfurylase (ATPS) that catalyzes the adenylation of sulfate producing adenosine 5'-phosphosulfate (APS) and diphosphate, the first enzymatic step in sulfur assimilation pathway. APS synthesis involves the formation of a high-energy phosphoric-sulfuric acid anhydride bond driven by GTP hydrolysis by CysN coupled to ATP hydrolysis by CysD. In terms of biological role, APS kinase catalyzes the synthesis of activated sulfate. The protein is Bifunctional enzyme CysN/CysC (cysNC) of Mycobacterium tuberculosis (strain CDC 1551 / Oshkosh).